We begin with the raw amino-acid sequence, 812 residues long: Lon protease (812 aa).

A Lon N-terminal domain is found at 22 to 215 (YAVLPLRDIV…KALSFMEAEI (194 aa)). 367–374 (GPPGVGKT) lines the ATP pocket. Residues 602-783 (EDQVGVVTGL…GEVLKHALVR (182 aa)) enclose the Lon proteolytic domain. Residues serine 689 and lysine 732 contribute to the active site. A disordered region spans residues 787–812 (PIEWTEQENPTAVPPVEDEAGASLAH).

This sequence belongs to the peptidase S16 family. In terms of assembly, homohexamer. Organized in a ring with a central cavity.

Its subcellular location is the cytoplasm. It carries out the reaction Hydrolysis of proteins in presence of ATP.. Its function is as follows. ATP-dependent serine protease that mediates the selective degradation of mutant and abnormal proteins as well as certain short-lived regulatory proteins. Required for cellular homeostasis and for survival from DNA damage and developmental changes induced by stress. Degrades polypeptides processively to yield small peptide fragments that are 5 to 10 amino acids long. Binds to DNA in a double-stranded, site-specific manner. The protein is Lon protease of Brucella melitensis biotype 1 (strain ATCC 23456 / CCUG 17765 / NCTC 10094 / 16M).